We begin with the raw amino-acid sequence, 171 residues long: Large ribosomal subunit protein bL9 (171 aa).

The protein belongs to the bacterial ribosomal protein bL9 family.

Binds to the 23S rRNA. The sequence is that of Large ribosomal subunit protein bL9 from Rickettsia peacockii (strain Rustic).